The primary structure comprises 1573 residues: Pentafunctional AROM polypeptide (1573 aa).

Positions 1 to 384 are 3-dehydroquinate synthase; the sequence is MSNESNIITV…YEKHATVVSD (384 aa). Residues 46 to 48, 83 to 86, 114 to 116, and Asp-119 each bind NAD(+); these read DSN, ESSK, and GGV. Arg-130 serves as a coordination point for 7-phospho-2-dehydro-3-deoxy-D-arabino-heptonate. 139 to 140 is an NAD(+) binding site; that stretch reads TT. 7-phospho-2-dehydro-3-deoxy-D-arabino-heptonate-binding residues include Asp-146 and Lys-152. Lys-161 contributes to the NAD(+) binding site. A 7-phospho-2-dehydro-3-deoxy-D-arabino-heptonate-binding site is contributed by Asn-162. NAD(+)-binding positions include 179–182 and Asn-190; that span reads FLHT. Glu-194 contacts Zn(2+). 7-phospho-2-dehydro-3-deoxy-D-arabino-heptonate contacts are provided by residues 194–197 and Lys-250; that span reads EIIK. Glu-260 acts as the Proton acceptor; for 3-dehydroquinate synthase activity in catalysis. Residues 264-268 and His-271 contribute to the 7-phospho-2-dehydro-3-deoxy-D-arabino-heptonate site; that span reads RNLLN. His-271 lines the Zn(2+) pocket. The active-site Proton acceptor; for 3-dehydroquinate synthase activity is the His-275. Residues His-287 and Lys-356 each contribute to the 7-phospho-2-dehydro-3-deoxy-D-arabino-heptonate site. Residue His-287 participates in Zn(2+) binding. The EPSP synthase stretch occupies residues 397–843; the sequence is VDEFTKSSWD…WDVLHQSFGV (447 aa). Cys-825 acts as the For EPSP synthase activity in catalysis. The shikimate kinase stretch occupies residues 863 to 1058; sequence NASIILIGMR…KTKKRSTFLT (196 aa). 870–877 contacts ATP; sequence GMRGAGKT. A 3-dehydroquinase region spans residues 1059–1280; it reads LNYPRIEDAL…AAPGQLTVKQ (222 aa). The active-site Proton acceptor; for 3-dehydroquinate dehydratase activity is the His-1182. Catalysis depends on Lys-1211, which acts as the Schiff-base intermediate with substrate; for 3-dehydroquinate dehydratase activity. The segment at 1293–1573 is shikimate dehydrogenase; sequence PEKFFLFGKP…FDAVYQKVIE (281 aa).

The protein in the N-terminal section; belongs to the sugar phosphate cyclases superfamily. Dehydroquinate synthase family. It in the 2nd section; belongs to the EPSP synthase family. In the 3rd section; belongs to the shikimate kinase family. This sequence in the 4th section; belongs to the type-I 3-dehydroquinase family. The protein in the C-terminal section; belongs to the shikimate dehydrogenase family. As to quaternary structure, homodimer. Zn(2+) is required as a cofactor.

Its subcellular location is the cytoplasm. The enzyme catalyses 7-phospho-2-dehydro-3-deoxy-D-arabino-heptonate = 3-dehydroquinate + phosphate. It carries out the reaction 3-dehydroquinate = 3-dehydroshikimate + H2O. The catalysed reaction is shikimate + NADP(+) = 3-dehydroshikimate + NADPH + H(+). It catalyses the reaction shikimate + ATP = 3-phosphoshikimate + ADP + H(+). The enzyme catalyses 3-phosphoshikimate + phosphoenolpyruvate = 5-O-(1-carboxyvinyl)-3-phosphoshikimate + phosphate. The protein operates within metabolic intermediate biosynthesis; chorismate biosynthesis; chorismate from D-erythrose 4-phosphate and phosphoenolpyruvate: step 2/7. It participates in metabolic intermediate biosynthesis; chorismate biosynthesis; chorismate from D-erythrose 4-phosphate and phosphoenolpyruvate: step 3/7. Its pathway is metabolic intermediate biosynthesis; chorismate biosynthesis; chorismate from D-erythrose 4-phosphate and phosphoenolpyruvate: step 4/7. It functions in the pathway metabolic intermediate biosynthesis; chorismate biosynthesis; chorismate from D-erythrose 4-phosphate and phosphoenolpyruvate: step 5/7. The protein operates within metabolic intermediate biosynthesis; chorismate biosynthesis; chorismate from D-erythrose 4-phosphate and phosphoenolpyruvate: step 6/7. Functionally, the AROM polypeptide catalyzes 5 consecutive enzymatic reactions in prechorismate polyaromatic amino acid biosynthesis. The chain is Pentafunctional AROM polypeptide from Schizosaccharomyces pombe (strain 972 / ATCC 24843) (Fission yeast).